Reading from the N-terminus, the 569-residue chain is Potassium-transporting ATPase potassium-binding subunit (569 aa).

10 helical membrane-spanning segments follow: residues 5 to 25, 65 to 85, 135 to 155, 179 to 199, 254 to 274, 286 to 306, 383 to 403, 422 to 442, 489 to 509, and 528 to 548; these read GWAE…PLGV, GYAG…YAVL, LVLT…AAAL, LYVL…LGLP, LTNL…FFAF, ALVI…YWTE, GIAV…LMVG, LLTV…AAVL, MGVA…AMAG, and GGLF…LQFF.

It belongs to the KdpA family. The system is composed of three essential subunits: KdpA, KdpB and KdpC.

It localises to the cell inner membrane. Its function is as follows. Part of the high-affinity ATP-driven potassium transport (or Kdp) system, which catalyzes the hydrolysis of ATP coupled with the electrogenic transport of potassium into the cytoplasm. This subunit binds the periplasmic potassium ions and delivers the ions to the membrane domain of KdpB through an intramembrane tunnel. This is Potassium-transporting ATPase potassium-binding subunit from Caulobacter sp. (strain K31).